The sequence spans 249 residues: Small ribosomal subunit protein eS6 (249 aa).

Lysine 14 participates in a covalent cross-link: Glycyl lysine isopeptide (Lys-Gly) (interchain with G-Cter in SUMO2). Glutamate 35 is modified (ADP-ribosyl glutamic acid). At arginine 137 the chain carries (3R)-3-hydroxyarginine. Serine 148 is modified (phosphoserine). Lysine 211 is modified (N6-acetyllysine). Basic and acidic residues predominate over residues 217–229; it reads MKEAKEKRQEQIA. The interval 217–249 is disordered; that stretch reads MKEAKEKRQEQIAKRRRLSSLRASTSKSESSQK. A phosphoserine mark is found at serine 235, serine 236, serine 240, serine 242, serine 244, and serine 247. Residues 236 to 249 show a composition bias toward low complexity; it reads SLRASTSKSESSQK.

The protein belongs to the eukaryotic ribosomal protein eS6 family. Component of the small ribosomal subunit. Part of the small subunit (SSU) processome, composed of more than 70 proteins and the RNA chaperone small nucleolar RNA (snoRNA) U3. Post-translationally, ribosomal protein S6 is the major substrate of protein kinases in eukaryote ribosomes. The phosphorylation is stimulated by growth factors, tumor promoting agents, and mitogens. It is dephosphorylated at growth arrest. Phosphorylated at Ser-235 and Ser-236 by RPS6KA1 and RPS6KA3; phosphorylation at these sites facilitates the assembly of the pre-initiation complex. Specifically hydroxylated (with R stereochemistry) at C-3 of Arg-137 by KDM8. In terms of processing, mono-ADP-ribosylation at Glu-35 by PARP16 inhibits polysome assembly and mRNA loading, thereby inhibiting protein translation.

It localises to the cytoplasm. Its subcellular location is the nucleus. The protein resides in the nucleolus. In terms of biological role, component of the 40S small ribosomal subunit. Plays an important role in controlling cell growth and proliferation through the selective translation of particular classes of mRNA. Part of the small subunit (SSU) processome, first precursor of the small eukaryotic ribosomal subunit. During the assembly of the SSU processome in the nucleolus, many ribosome biogenesis factors, an RNA chaperone and ribosomal proteins associate with the nascent pre-rRNA and work in concert to generate RNA folding, modifications, rearrangements and cleavage as well as targeted degradation of pre-ribosomal RNA by the RNA exosome. In Oryctolagus cuniculus (Rabbit), this protein is Small ribosomal subunit protein eS6 (RPS6).